We begin with the raw amino-acid sequence, 145 residues long: uncharacterized protein (145 aa).

The chain crosses the membrane as a helical span at residues 16 to 36 (VLAYLLQLSASLVLPVAIWLI).

It localises to the mitochondrion membrane. This is an uncharacterized protein from Arabidopsis thaliana (Mouse-ear cress).